A 163-amino-acid polypeptide reads, in one-letter code: Putative 4-hydroxy-4-methyl-2-oxoglutarate aldolase (163 aa).

Substrate-binding positions include 76–79 and R98; that span reads GDMI. D99 is an a divalent metal cation binding site.

It belongs to the class II aldolase/RraA-like family. In terms of assembly, homotrimer. A divalent metal cation is required as a cofactor.

The catalysed reaction is 4-hydroxy-4-methyl-2-oxoglutarate = 2 pyruvate. It carries out the reaction oxaloacetate + H(+) = pyruvate + CO2. In terms of biological role, catalyzes the aldol cleavage of 4-hydroxy-4-methyl-2-oxoglutarate (HMG) into 2 molecules of pyruvate. Also contains a secondary oxaloacetate (OAA) decarboxylase activity due to the common pyruvate enolate transition state formed following C-C bond cleavage in the retro-aldol and decarboxylation reactions. The polypeptide is Putative 4-hydroxy-4-methyl-2-oxoglutarate aldolase (Pseudomonas fluorescens (strain SBW25)).